A 642-amino-acid polypeptide reads, in one-letter code: Threonine--tRNA ligase (642 aa).

Residues 1-63 form the TGS domain; the sequence is MNDITVTLPD…YNDARVVIVT (63 aa). The catalytic stretch occupies residues 242-533; that stretch reads DHRKIGQELD…LIEHFNGKFP (292 aa). Zn(2+)-binding residues include Cys-334, His-385, and His-510.

The protein belongs to the class-II aminoacyl-tRNA synthetase family. As to quaternary structure, homodimer. The cofactor is Zn(2+).

It localises to the cytoplasm. The catalysed reaction is tRNA(Thr) + L-threonine + ATP = L-threonyl-tRNA(Thr) + AMP + diphosphate + H(+). Functionally, catalyzes the attachment of threonine to tRNA(Thr) in a two-step reaction: L-threonine is first activated by ATP to form Thr-AMP and then transferred to the acceptor end of tRNA(Thr). This chain is Threonine--tRNA ligase, found in Haloquadratum walsbyi (strain DSM 16790 / HBSQ001).